Here is a 614-residue protein sequence, read N- to C-terminus: GPI transamidase component GAA1 (614 aa).

Topologically, residues M1–R19 are cytoplasmic. Residues I20–A40 form a helical membrane-spanning segment. The Lumenal segment spans residues I41–S356. N87 is a glycosylation site (N-linked (GlcNAc...) asparagine). A helical transmembrane segment spans residues Y357 to I377. At N378–A394 the chain is on the cytoplasmic side. The chain crosses the membrane as a helical span at residues L395–I415. Topologically, residues P416–L464 are lumenal. The helical transmembrane segment at L465 to V485 threads the bilayer. At K486–K535 the chain is on the cytoplasmic side. A helical transmembrane segment spans residues N536–F556. The Lumenal portion of the chain corresponds to D557–K577. A helical membrane pass occupies residues C578 to S598. Topologically, residues S599–S614 are cytoplasmic. The short motif at K610 to S614 is the Prevents secretion from ER element.

As to quaternary structure, forms a complex with CDC91, GPI17, GPI16 and GPI8.

The protein resides in the endoplasmic reticulum membrane. The protein operates within glycolipid biosynthesis; glycosylphosphatidylinositol-anchor biosynthesis. Its function is as follows. Component of the GPI transamidase complex. Required for a terminal step of GPI anchor attachment onto proteins. Affects endocytosis. The sequence is that of GPI transamidase component GAA1 (GAA1) from Saccharomyces cerevisiae (strain ATCC 204508 / S288c) (Baker's yeast).